The primary structure comprises 163 residues: Large ribosomal subunit protein uL22c (163 aa).

Belongs to the universal ribosomal protein uL22 family. Part of the 50S ribosomal subunit.

It localises to the plastid. The protein localises to the chloroplast. Its function is as follows. This protein binds specifically to 23S rRNA. The globular domain of the protein is located near the polypeptide exit tunnel on the outside of the subunit, while an extended beta-hairpin is found that lines the wall of the exit tunnel in the center of the 70S ribosome. In Lobularia maritima (Sweet alyssum), this protein is Large ribosomal subunit protein uL22c (rpl22).